We begin with the raw amino-acid sequence, 67 residues long: DNA-directed RNA polymerase subunit omega (67 aa).

This sequence belongs to the RNA polymerase subunit omega family. As to quaternary structure, the RNAP catalytic core consists of 2 alpha, 1 beta, 1 beta' and 1 omega subunit. When a sigma factor is associated with the core the holoenzyme is formed, which can initiate transcription.

The enzyme catalyses RNA(n) + a ribonucleoside 5'-triphosphate = RNA(n+1) + diphosphate. Promotes RNA polymerase assembly. Latches the N- and C-terminal regions of the beta' subunit thereby facilitating its interaction with the beta and alpha subunits. This Exiguobacterium sibiricum (strain DSM 17290 / CCUG 55495 / CIP 109462 / JCM 13490 / 255-15) protein is DNA-directed RNA polymerase subunit omega.